We begin with the raw amino-acid sequence, 760 residues long: Dipeptidyl peptidase 4 (760 aa).

The Cytoplasmic segment spans residues 1-6 (MKTPWK). The chain crosses the membrane as a helical; Signal-anchor for type II membrane protein span at residues 7–28 (VLLGLLGVAALVTIITVPIVLL). At 29–760 (SKDEAAADSR…HFLQQCFSLH (732 aa)) the chain is on the extracellular side. Residues N83, N90, N144, N213, N223, N315, and N328 are each glycosylated (N-linked (GlcNAc...) asparagine). 4 disulfide bridges follow: C322–C333, C379–C388, C438–C441, and C448–C466. An N-linked (GlcNAc...) asparagine glycan is attached at N514. S624 (charge relay system) is an active-site residue. A disulfide bridge links C643 with C756. N679 carries N-linked (GlcNAc...) asparagine glycosylation. Catalysis depends on charge relay system residues D702 and H734.

The protein belongs to the peptidase S9B family. DPPIV subfamily. Monomer. Homodimer. Heterodimer with Seprase (FAP). Requires homodimerization for optimal dipeptidyl peptidase activity and T-cell costimulation. Found in a membrane raft complex, at least composed of BCL10, CARD11, DPP4 and IKBKB. Associates with collagen. Interacts with PTPRC; the interaction is enhanced in an interleukin-12-dependent manner in activated lymphocytes. Interacts (via extracellular domain) with ADA; does not inhibit its dipeptidyl peptidase activity. Interacts with CAV1 (via the N-terminus); the interaction is direct. Interacts (via cytoplasmic tail) with CARD11 (via PDZ domain); its homodimerization is necessary for interaction with CARD11. Interacts with IGF2R; the interaction is direct. Interacts with GPC3. The soluble form (Dipeptidyl peptidase 4 soluble form also named SDPP) derives from the membrane form (Dipeptidyl peptidase 4 membrane form also named MDPP) by proteolytic processing. Post-translationally, N- and O-Glycosylated. In terms of processing, phosphorylated. Mannose 6-phosphate residues in the carbohydrate moiety are necessary for interaction with IGF2R in activated T-cells. Mannose 6-phosphorylation is induced during T-cell activation.

Its subcellular location is the secreted. The protein localises to the cell membrane. The protein resides in the apical cell membrane. It is found in the cell projection. It localises to the invadopodium membrane. Its subcellular location is the lamellipodium membrane. The protein localises to the cell junction. The protein resides in the membrane raft. The catalysed reaction is Release of an N-terminal dipeptide, Xaa-Yaa-|-Zaa-, from a polypeptide, preferentially when Yaa is Pro, provided Zaa is neither Pro nor hydroxyproline.. Its activity is regulated as follows. Inhibited by GPC3 and diprotin A. Cell surface glycoprotein receptor involved in the costimulatory signal essential for T-cell receptor (TCR)-mediated T-cell activation. Acts as a positive regulator of T-cell coactivation, by binding at least ADA, CAV1, IGF2R, and PTPRC. Its binding to CAV1 and CARD11 induces T-cell proliferation and NF-kappa-B activation in a T-cell receptor/CD3-dependent manner. Its interaction with ADA also regulates lymphocyte-epithelial cell adhesion. In association with FAP is involved in the pericellular proteolysis of the extracellular matrix (ECM), the migration and invasion of endothelial cells into the ECM. May be involved in the promotion of lymphatic endothelial cells adhesion, migration and tube formation. When overexpressed, enhanced cell proliferation, a process inhibited by GPC3. Also acts as a serine exopeptidase with a dipeptidyl peptidase activity that regulates various physiological processes by cleaving peptides in the circulation, including many chemokines, mitogenic growth factors, neuropeptides and peptide hormones. Removes N-terminal dipeptides sequentially from polypeptides having unsubstituted N-termini provided that the penultimate residue is proline. This Mus musculus (Mouse) protein is Dipeptidyl peptidase 4 (Dpp4).